We begin with the raw amino-acid sequence, 335 residues long: Lipoyl synthase (335 aa).

Residues 1–13 (MTIDTNPESSTPS) show a composition bias toward polar residues. The segment at 1-29 (MTIDTNPESSTPSAPAYNPSEKQKGSAKT) is disordered. Positions 75, 80, 86, 101, 105, 108, and 315 each coordinate [4Fe-4S] cluster. Residues 86–304 (CFGKGTATFM…EEEAYKMGFA (219 aa)) enclose the Radical SAM core domain.

This sequence belongs to the radical SAM superfamily. Lipoyl synthase family. It depends on [4Fe-4S] cluster as a cofactor.

The protein localises to the cytoplasm. The catalysed reaction is [[Fe-S] cluster scaffold protein carrying a second [4Fe-4S](2+) cluster] + N(6)-octanoyl-L-lysyl-[protein] + 2 oxidized [2Fe-2S]-[ferredoxin] + 2 S-adenosyl-L-methionine + 4 H(+) = [[Fe-S] cluster scaffold protein] + N(6)-[(R)-dihydrolipoyl]-L-lysyl-[protein] + 4 Fe(3+) + 2 hydrogen sulfide + 2 5'-deoxyadenosine + 2 L-methionine + 2 reduced [2Fe-2S]-[ferredoxin]. Its pathway is protein modification; protein lipoylation via endogenous pathway; protein N(6)-(lipoyl)lysine from octanoyl-[acyl-carrier-protein]: step 2/2. Its function is as follows. Catalyzes the radical-mediated insertion of two sulfur atoms into the C-6 and C-8 positions of the octanoyl moiety bound to the lipoyl domains of lipoate-dependent enzymes, thereby converting the octanoylated domains into lipoylated derivatives. In Herminiimonas arsenicoxydans, this protein is Lipoyl synthase.